The following is an 885-amino-acid chain: Chitin synthase 3 (885 aa).

Positions 1-59 are disordered; that stretch reads MASQYPGHQLDDIPSTNVYRPPPRHEDDEAEHALLHQNSAYQSQYDDPHSRPLTPGQES. Positions 23–34 are enriched in basic and acidic residues; the sequence is PRHEDDEAEHAL. Positions 36-45 are enriched in polar residues; it reads HQNSAYQSQY. A run of 6 helical transmembrane segments spans residues 565-585, 620-640, 650-670, 707-727, 735-755, and 837-857; these read FFLHIQMIYNIVSVLLSWFSL, IINTILQYLYLAFLLLQFILA, VAYIISFCLFGLIQLYVIVLS, IVIIALAATFGLYFVASFLYM, SFAQYLLLMPSFINILMIYAF, and LVATWIFSNALLAVAITSDSL.

The protein belongs to the chitin synthase family. Class III subfamily.

It is found in the cell membrane. The catalysed reaction is [(1-&gt;4)-N-acetyl-beta-D-glucosaminyl](n) + UDP-N-acetyl-alpha-D-glucosamine = [(1-&gt;4)-N-acetyl-beta-D-glucosaminyl](n+1) + UDP + H(+). Its function is as follows. Polymerizes chitin, a structural polymer of the cell wall and septum, by transferring the sugar moiety of UDP-GlcNAc to the non-reducing end of the growing chitin polymer. Is not only stable at different pH, but is also able to tolerate a broad temperature range. With CHS2, plays an important role in virulence. In Exophiala dermatitidis (Black yeast-like fungus), this protein is Chitin synthase 3.